The chain runs to 510 residues: NAD(P)H-quinone oxidoreductase subunit 2 B, chloroplastic (510 aa).

Transmembrane regions (helical) follow at residues Leu-24–Leu-44, Ile-57–Phe-77, Ile-99–Ile-119, Met-124–Cys-144, Leu-149–Tyr-169, Tyr-183–Gly-203, Pro-227–Ala-247, Trp-295–Ile-315, Met-323–Asp-343, Tyr-354–Leu-374, Ala-395–Phe-415, Gly-428–Leu-448, and Met-484–Ile-504.

It belongs to the complex I subunit 2 family. As to quaternary structure, NDH is composed of at least 16 different subunits, 5 of which are encoded in the nucleus.

It localises to the plastid. The protein resides in the chloroplast thylakoid membrane. The enzyme catalyses a plastoquinone + NADH + (n+1) H(+)(in) = a plastoquinol + NAD(+) + n H(+)(out). The catalysed reaction is a plastoquinone + NADPH + (n+1) H(+)(in) = a plastoquinol + NADP(+) + n H(+)(out). NDH shuttles electrons from NAD(P)H:plastoquinone, via FMN and iron-sulfur (Fe-S) centers, to quinones in the photosynthetic chain and possibly in a chloroplast respiratory chain. The immediate electron acceptor for the enzyme in this species is believed to be plastoquinone. Couples the redox reaction to proton translocation, and thus conserves the redox energy in a proton gradient. The chain is NAD(P)H-quinone oxidoreductase subunit 2 B, chloroplastic from Eucalyptus globulus subsp. globulus (Tasmanian blue gum).